The chain runs to 317 residues: Spore protein CgeB (317 aa).

May be involved in maturation of the outermost layer of the spore. May act as a glycosyltransferase that contributes to the glycosylation state of the spore. The sequence is that of Spore protein CgeB from Bacillus subtilis (strain 168).